A 720-amino-acid chain; its full sequence is Phenylalanine--tRNA ligase beta subunit, chloroplastic (720 aa).

The region spanning 319 to 404 is the B5 domain; it reads NSTLNIDISL…RVYGYNQFQS (86 aa). Positions 382, 388, 391, and 392 each coordinate Mg(2+). The FDX-ACB domain occupies 626-719; sequence SKYPCITRDL…IIKKLNLEIR (94 aa).

It belongs to the phenylalanyl-tRNA synthetase beta subunit family. Type 1 subfamily. Tetramer of two alpha and two beta subunits. It depends on Mg(2+) as a cofactor.

The protein resides in the plastid. It is found in the chloroplast. It catalyses the reaction tRNA(Phe) + L-phenylalanine + ATP = L-phenylalanyl-tRNA(Phe) + AMP + diphosphate + H(+). The sequence is that of Phenylalanine--tRNA ligase beta subunit, chloroplastic (pheT) from Porphyra purpurea (Red seaweed).